The sequence spans 356 residues: S-adenosylmethionine:tRNA ribosyltransferase-isomerase (356 aa).

It belongs to the QueA family. In terms of assembly, monomer.

The protein resides in the cytoplasm. It carries out the reaction 7-aminomethyl-7-carbaguanosine(34) in tRNA + S-adenosyl-L-methionine = epoxyqueuosine(34) in tRNA + adenine + L-methionine + 2 H(+). It participates in tRNA modification; tRNA-queuosine biosynthesis. Its function is as follows. Transfers and isomerizes the ribose moiety from AdoMet to the 7-aminomethyl group of 7-deazaguanine (preQ1-tRNA) to give epoxyqueuosine (oQ-tRNA). The chain is S-adenosylmethionine:tRNA ribosyltransferase-isomerase from Escherichia coli O127:H6 (strain E2348/69 / EPEC).